Reading from the N-terminus, the 155-residue chain is Nuclear cap-binding protein subunit 2 (155 aa).

Residues Tyr-19, Tyr-42, 111–115 (RTDWD), 122–126 (RQYGR), and 132–133 (QV) contribute to the mRNA site. Positions 39–117 (NTLYVGNLSF…RIIRTDWDAG (79 aa)) constitute an RRM domain. The interval 122 to 155 (RQYGRGKSGGQVRDEYRQDYDPARGGYGKVVSRP) is disordered. Over residues 133 to 143 (VRDEYRQDYDP) the composition is skewed to basic and acidic residues.

It belongs to the RRM NCBP2 family. Component of the nuclear cap-binding complex (CBC), a heterodimer composed of ncbp1/cbp80 and ncbp2/cbp20 that interacts with m7GpppG-capped RNA.

It is found in the nucleus. The protein resides in the cytoplasm. In terms of biological role, component of the cap-binding complex (CBC), which binds co-transcriptionally to the 5' cap of pre-mRNAs and is involved in various processes such as pre-mRNA splicing, translation regulation, nonsense-mediated mRNA decay, RNA-mediated gene silencing (RNAi) by microRNAs (miRNAs) and mRNA export. The CBC complex is involved in mRNA export from the nucleus, leading to the recruitment of the mRNA export machinery to the 5' end of mRNA and to mRNA export in a 5' to 3' direction through the nuclear pore. The CBC complex is also involved in mediating U snRNA and intronless mRNAs export from the nucleus. The CBC complex is essential for a pioneer round of mRNA translation, before steady state translation when the CBC complex is replaced by cytoplasmic cap-binding protein eIF4E. The pioneer round of mRNA translation mediated by the CBC complex plays a central role in nonsense-mediated mRNA decay (NMD), NMD only taking place in mRNAs bound to the CBC complex, but not on eIF4E-bound mRNAs. The CBC complex enhances NMD in mRNAs containing at least one exon-junction complex (EJC), promoting the interaction between upf1 and upf2. The CBC complex is also involved in 'failsafe' NMD, which is independent of the EJC complex, while it does not participate in Staufen-mediated mRNA decay (SMD). During cell proliferation, the CBC complex is also involved in microRNAs (miRNAs) biogenesis via its interaction with srrt/ars2, thereby being required for miRNA-mediated RNA interference. The CBC complex also acts as a negative regulator of parn, thereby acting as an inhibitor of mRNA deadenylation. In the CBC complex, ncbp2/cbp20 recognizes and binds capped RNAs (m7GpppG-capped RNA) but requires ncbp1/cbp80 to stabilize the movement of its N-terminal loop and lock the CBC into a high affinity cap-binding state with the cap structure. The conventional cap-binding complex with NCBP2 binds both small nuclear RNA (snRNA) and messenger (mRNA) and is involved in their export from the nucleus. The protein is Nuclear cap-binding protein subunit 2 (ncbp2) of Salmo salar (Atlantic salmon).